Consider the following 325-residue polypeptide: MSSPVISPETKTGKKILLAAPRGYCAGVDRAVETVERALEEYGAPIYVRKEIVHNRYVVDTLAEKGAIFVNEASEAPEGANMVFSAHGVSPMVHEEAAAKNIKAIDAACPLVTKVHKEVQRFDKQGFHILFIGHEGHEEVEGTMGHSVEKTHLVDGVAGIATLPEFLNDEPNLIWLSQTTLSVDETMEIVRELKVKFPQLQDPPSDDICYATQNRQVAVKAIAERCELMIVVGSRNSSNSVRLVEVAKQNGADNAYLVDYAREIDPAWFEGVETIGISSGASVPEILVQGVIERLAEFGYDDVEEVTSAAEKIVFALPRVLRHKN.

Cysteine 25 serves as a coordination point for [4Fe-4S] cluster. The (2E)-4-hydroxy-3-methylbut-2-enyl diphosphate site is built by histidine 54 and histidine 87. Residues histidine 54 and histidine 87 each contribute to the dimethylallyl diphosphate site. Histidine 54 and histidine 87 together coordinate isopentenyl diphosphate. [4Fe-4S] cluster is bound at residue cysteine 109. Histidine 137 is a binding site for (2E)-4-hydroxy-3-methylbut-2-enyl diphosphate. Histidine 137 provides a ligand contact to dimethylallyl diphosphate. An isopentenyl diphosphate-binding site is contributed by histidine 137. Glutamate 139 serves as the catalytic Proton donor. Residue threonine 179 coordinates (2E)-4-hydroxy-3-methylbut-2-enyl diphosphate. Cysteine 209 is a binding site for [4Fe-4S] cluster. Residues serine 237, serine 238, asparagine 239, and serine 282 each coordinate (2E)-4-hydroxy-3-methylbut-2-enyl diphosphate. Dimethylallyl diphosphate is bound by residues serine 237, serine 238, asparagine 239, and serine 282. Isopentenyl diphosphate contacts are provided by serine 237, serine 238, asparagine 239, and serine 282.

It belongs to the IspH family. [4Fe-4S] cluster serves as cofactor.

It catalyses the reaction isopentenyl diphosphate + 2 oxidized [2Fe-2S]-[ferredoxin] + H2O = (2E)-4-hydroxy-3-methylbut-2-enyl diphosphate + 2 reduced [2Fe-2S]-[ferredoxin] + 2 H(+). It carries out the reaction dimethylallyl diphosphate + 2 oxidized [2Fe-2S]-[ferredoxin] + H2O = (2E)-4-hydroxy-3-methylbut-2-enyl diphosphate + 2 reduced [2Fe-2S]-[ferredoxin] + 2 H(+). Its pathway is isoprenoid biosynthesis; dimethylallyl diphosphate biosynthesis; dimethylallyl diphosphate from (2E)-4-hydroxy-3-methylbutenyl diphosphate: step 1/1. It participates in isoprenoid biosynthesis; isopentenyl diphosphate biosynthesis via DXP pathway; isopentenyl diphosphate from 1-deoxy-D-xylulose 5-phosphate: step 6/6. In terms of biological role, catalyzes the conversion of 1-hydroxy-2-methyl-2-(E)-butenyl 4-diphosphate (HMBPP) into a mixture of isopentenyl diphosphate (IPP) and dimethylallyl diphosphate (DMAPP). Acts in the terminal step of the DOXP/MEP pathway for isoprenoid precursor biosynthesis. The chain is 4-hydroxy-3-methylbut-2-enyl diphosphate reductase from Corynebacterium glutamicum (strain ATCC 13032 / DSM 20300 / JCM 1318 / BCRC 11384 / CCUG 27702 / LMG 3730 / NBRC 12168 / NCIMB 10025 / NRRL B-2784 / 534).